The following is a 226-amino-acid chain: MINAIITDIEGTTSSIAFVKEVLFPYAAKRFPDFLADHWDHPCVQEQIKAAEKESGETLGSADKAAALFLRWIEEDRKATPLKTLQGMIWKAGYENGDYTAHMYPDTAPALKKWHQKGIALYVYSSGSITAQKLFFGYSDAGDLTGLLSGYFDTTTGPKQETDSYRKIQQAIDKPANTLLFLSDIEAELDAAAEAGFNTCLLDRQQAGLESRHPVASNFNHINLAD.

The protein belongs to the HAD-like hydrolase superfamily. MasA/MtnC family. Monomer. Mg(2+) is required as a cofactor.

It carries out the reaction 5-methylsulfanyl-2,3-dioxopentyl phosphate + H2O = 1,2-dihydroxy-5-(methylsulfanyl)pent-1-en-3-one + phosphate. Its pathway is amino-acid biosynthesis; L-methionine biosynthesis via salvage pathway; L-methionine from S-methyl-5-thio-alpha-D-ribose 1-phosphate: step 3/6. The protein operates within amino-acid biosynthesis; L-methionine biosynthesis via salvage pathway; L-methionine from S-methyl-5-thio-alpha-D-ribose 1-phosphate: step 4/6. Functionally, bifunctional enzyme that catalyzes the enolization of 2,3-diketo-5-methylthiopentyl-1-phosphate (DK-MTP-1-P) into the intermediate 2-hydroxy-3-keto-5-methylthiopentenyl-1-phosphate (HK-MTPenyl-1-P), which is then dephosphorylated to form the acireductone 1,2-dihydroxy-3-keto-5-methylthiopentene (DHK-MTPene). The protein is Enolase-phosphatase E1 of Alcanivorax borkumensis (strain ATCC 700651 / DSM 11573 / NCIMB 13689 / SK2).